A 469-amino-acid polypeptide reads, in one-letter code: NADH-quinone oxidoreductase subunit 13 (469 aa).

Transmembrane regions (helical) follow at residues 1 to 21, 23 to 43, 47 to 67, 69 to 89, 91 to 111, 115 to 135, 144 to 164, 190 to 210, 258 to 278, 284 to 304, 308 to 328, 354 to 374, 390 to 410, and 430 to 450; these read MVVLAVLLPVVFGALLLLGLP, ALGVLGAGLSFLLNLYLFLTH, VAHAFQAPLLPGAGVYWAFGL, GLSALFFLTIALTVFLGALVA, VEGRFLGLALLMEGLLLGLFA, LLVFYVFFEAALIPALLMLYL, ALYTFVLFTLVGSLPMLAAVL, AFWVFLGFALAFAIKTPLFPL, GLLLFLAALSALYGAWVAFAA, LLAYAGLSHMGVAALGVFSGT, AMGGLYLLAASGVYTGGLFLL, LAALALILFLAMVGLPGLSGF, WLAALAFLSVIASAAYALTAF, and WGFALLSVLALLLMGVFPGYF.

It belongs to the complex I subunit 4 family. NDH-1 is composed of 15 different subunits, Nqo1 to Nqo15. The complex has a L-shaped structure, with the hydrophobic arm (subunits Nqo7, Nqo8 and Nqo10 to Nqo14) embedded in the membrane and the hydrophilic peripheral arm (subunits Nqo1 to Nqo6, Nqo9 and Nqo15) protruding into the bacterial cytoplasm. The hydrophilic domain contains all the redox centers.

It is found in the cell inner membrane. The catalysed reaction is a quinone + NADH + 5 H(+)(in) = a quinol + NAD(+) + 4 H(+)(out). In terms of biological role, NDH-1 shuttles electrons from NADH, via FMN and iron-sulfur (Fe-S) centers, to quinones in the respiratory chain. The immediate electron acceptor for the enzyme in this species is menaquinone. Couples the redox reaction to proton translocation (for every two electrons transferred, four hydrogen ions are translocated across the cytoplasmic membrane), and thus conserves the redox energy in a proton gradient required for the synthesis of ATP. This is NADH-quinone oxidoreductase subunit 13 (nqo13) from Thermus thermophilus (strain ATCC 27634 / DSM 579 / HB8).